Here is a 528-residue protein sequence, read N- to C-terminus: Bifunctional dihydrofolate reductase-thymidylate synthase (528 aa).

The segment at 1–20 (MASELLANPTNGSGITRPDP) is disordered. Residues 23–200 (TYQVVVAATQ…IRYCFTTYVR (178 aa)) enclose the DHFR domain. V27 is a substrate binding site. Residues A29 and 35 to 41 (GIGKDGK) each bind NADP(+). Substrate is bound at residue D49. NADP(+)-binding positions include 73–75 (RKT) and 94–97 (LTRS). Substrate-binding residues include I136, Y142, and T157. 137–144 (GGGQIYRE) lines the NADP(+) pocket. Residues 202–528 (RNSVAELTSQ…HQKIEMKMAV (327 aa)) form a thymidylate synthase region. R264 contributes to the dUMP binding site. C409 is a catalytic residue. DUMP is bound by residues H410, 428-432 (QRSAD), N440, and 470-472 (HVY).

The protein in the N-terminal section; belongs to the dihydrofolate reductase family. In the C-terminal section; belongs to the thymidylate synthase family.

The catalysed reaction is (6S)-5,6,7,8-tetrahydrofolate + NADP(+) = 7,8-dihydrofolate + NADPH + H(+). It catalyses the reaction dUMP + (6R)-5,10-methylene-5,6,7,8-tetrahydrofolate = 7,8-dihydrofolate + dTMP. It participates in cofactor biosynthesis; tetrahydrofolate biosynthesis; 5,6,7,8-tetrahydrofolate from 7,8-dihydrofolate: step 1/1. Functionally, bifunctional enzyme. Involved in de novo dTMP biosynthesis. Key enzyme in folate metabolism. Can play two different roles depending on the source of dihydrofolate: de novo synthesis of tetrahydrofolate or recycling of the dihydrofolate released as one of the end products of the TS catalyzed reaction. Catalyzes an essential reaction for de novo glycine and purine synthesis, DNA precursor synthesis, and for the conversion of dUMP to dTMP. In Daucus carota (Wild carrot), this protein is Bifunctional dihydrofolate reductase-thymidylate synthase.